We begin with the raw amino-acid sequence, 447 residues long: Na(+)-translocating NADH-quinone reductase subunit A (447 aa).

This sequence belongs to the NqrA family. As to quaternary structure, composed of six subunits; NqrA, NqrB, NqrC, NqrD, NqrE and NqrF.

The catalysed reaction is a ubiquinone + n Na(+)(in) + NADH + H(+) = a ubiquinol + n Na(+)(out) + NAD(+). In terms of biological role, NQR complex catalyzes the reduction of ubiquinone-1 to ubiquinol by two successive reactions, coupled with the transport of Na(+) ions from the cytoplasm to the periplasm. NqrA to NqrE are probably involved in the second step, the conversion of ubisemiquinone to ubiquinol. This is Na(+)-translocating NADH-quinone reductase subunit A from Klebsiella pneumoniae (strain 342).